The following is a 117-amino-acid chain: MISIILVMIGGGFGAIARSAITDYFNHKFTSKLPIATLIVNLVGSFLIGLTIGLSISISWFPAFFVTGFLGGLTTFSTLAKELTLMMTPKFNINLFLNYSLLQFIIGFIACYIGYHI.

2 helical membrane passes run 1-21 (MISI…RSAI) and 46-66 (FLIG…AFFV). Na(+)-binding residues include G71 and T74. The helical transmembrane segment at 95-115 (LFLNYSLLQFIIGFIACYIGY) threads the bilayer.

It belongs to the fluoride channel Fluc/FEX (TC 1.A.43) family.

Its subcellular location is the cell membrane. The catalysed reaction is fluoride(in) = fluoride(out). Na(+) is not transported, but it plays an essential structural role and its presence is essential for fluoride channel function. Functionally, fluoride-specific ion channel. Important for reducing fluoride concentration in the cell, thus reducing its toxicity. The protein is Fluoride-specific ion channel FluC 2 of Staphylococcus aureus (strain NCTC 8325 / PS 47).